The following is a 189-amino-acid chain: uncharacterized protein (189 aa).

A coiled-coil region spans residues 31–54 (KCENIDDLANRYEVSKQEVEKVFK). EF-hand domains lie at 47-82 (QEVE…LGID), 83-118 (VSPK…KIKL), 120-155 (TVKA…TVST), and 157-189 (ITVK…CQTV). Ca(2+) is bound by residues Asp-60, Asp-62, Ser-64, Thr-66, Glu-71, Asp-96, Ser-98, Asp-100, Gln-102, Glu-107, Asp-133, Asn-135, Glu-137, and Glu-144.

This is an uncharacterized protein from Caenorhabditis elegans.